The sequence spans 374 residues: MSGEGDTTLKAICYKPGSLQLLDQRKLPLETIYLEIRDASDGWSAIQEMVVRGAPAIAIAAALSLAVEVFNFHGFDGSASDAVAFLENKLDYLVSSRPTAVNLADAALKLKHVIAKALATATEAKSIFKAYIEASEDMLEDDVVSNKAIGNFGLSLLRQQAKNPDKLSVLTHCNTGSLATAGYGTALGVIRALHTQGILERAYCTETRPFNQGSRLTAFELVHEKIPATLIADSAAAALMKDGRVDGVIVGADRVASNGDTANKIGTYSLALCAKHHGIPFYVAAPLTSVDLSLSSGKEIVIEERSPKELMHTHGGLGERIAAPGISVWNPAFDMTPAELIAGIITEKGVITKNGNDTFDISSFAKKITGNSSR.

Position 2 is an N-acetylserine (Ser-2). Asp-253 acts as the Proton donor in catalysis.

Belongs to the eIF-2B alpha/beta/delta subunits family. MtnA subfamily.

It localises to the cytoplasm. The protein localises to the nucleus. The enzyme catalyses 5-(methylsulfanyl)-alpha-D-ribose 1-phosphate = 5-(methylsulfanyl)-D-ribulose 1-phosphate. The protein operates within amino-acid biosynthesis; L-methionine biosynthesis via salvage pathway; L-methionine from S-methyl-5-thio-alpha-D-ribose 1-phosphate: step 1/6. Functionally, catalyzes the interconversion of methylthioribose-1-phosphate (MTR-1-P) into methylthioribulose-1-phosphate (MTRu-1-P). The sequence is that of Methylthioribose-1-phosphate isomerase from Arabidopsis thaliana (Mouse-ear cress).